The chain runs to 413 residues: Intracellular hyaluronan-binding protein 4 (413 aa).

Phosphoserine is present on residues serine 7 and serine 36. A coiled-coil region spans residues aspartate 40 to alanine 64. The segment at leucine 42–aspartate 206 is disordered. The segment covering alanine 62–arginine 82 has biased composition (low complexity). An Omega-N-methylarginine modification is found at arginine 70. At serine 74 the chain carries Phosphoserine. The segment covering glycine 87–serine 97 has biased composition (basic and acidic residues). The residue at position 108 (serine 108) is a Phosphoserine. Over residues methionine 139–leucine 182 the composition is skewed to basic and acidic residues. The segment covering glycine 184 to glycine 201 has biased composition (gly residues). Glycyl lysine isopeptide (Lys-Gly) (interchain with G-Cter in SUMO1); alternate cross-links involve residues lysine 213 and lysine 276. Glycyl lysine isopeptide (Lys-Gly) (interchain with G-Cter in SUMO2); alternate cross-links involve residues lysine 213 and lysine 276. Residues valine 227 to serine 320 form a disordered region. Residues aspartate 294–glutamate 315 show a composition bias toward basic and acidic residues. Lysine 336 participates in a covalent cross-link: Glycyl lysine isopeptide (Lys-Gly) (interchain with G-Cter in SUMO1); alternate. Lysine 336 participates in a covalent cross-link: Glycyl lysine isopeptide (Lys-Gly) (interchain with G-Cter in SUMO2); alternate. Phosphothreonine; by PKC is present on residues threonine 354 and threonine 375. The disordered stretch occupies residues asparagine 360–serine 413. The segment covering aspartate 404–serine 413 has biased composition (acidic residues).

It belongs to the SERBP1-HABP4 family. As to quaternary structure, associates with ribosomes; promoting ribosome stabilization. Interacts with EEF2/eEF2; promoting ribosome stabilization. Interacts with FMR1. Interacts with FXR1 and FXR2. Interacts with CHD3 (via C-terminus). Interacts (via C-terminus) with RACK1. Interacts with p53/TP53. Interacts (via N-terminus) with SRSF9; this interaction is direct. Interacts with SYNCRIP; this interaction is direct. Interacts with MEF2C (via N-terminus); this interaction decreases DNA-binding activity of MEF2C in myocardial cells in response to mechanical stress. Interacts with PRMT1 (via N-terminus). Interacts with SPIN1. Post-translationally, methylated. Methylation is decreased by phorbol 12-myristate 13-acetate (PMA)-activated PKC, in vitro. Phosphorylated by phorbol 12-myristate 13-acetate (PMA)-activated PKC isoforms at Thr-354 and Thr-375. Highly expressed in brain, heart, and kidney, and moderately expressed in skeletal muscle. Also expressed in a variety of tumor cell lines and in activated but not resting leukocytes.

The protein localises to the nucleus. Its subcellular location is the cytoplasm. It is found in the stress granule. It localises to the sarcoplasm. The protein resides in the nuclear body. The protein localises to the nucleolus. Its subcellular location is the nucleus speckle. It is found in the cajal body. It localises to the gem. Ribosome-binding protein that promotes ribosome hibernation, a process during which ribosomes are stabilized in an inactive state and preserved from proteasomal degradation. Acts via its association with EEF2/eEF2 factor at the A-site of the ribosome, promoting ribosome stabilization in an inactive state compatible with storage. Plays a key role in ribosome hibernation in the mature oocyte by promoting ribosome stabilization. Ribosomes, which are produced in large quantities during oogenesis, are stored and translationally repressed in the oocyte and early embryo. Also binds RNA, regulating transcription and pre-mRNA splicing. Binds (via C-terminus) to poly(U) RNA. Seems to play a role in PML-nuclear bodies formation. Negatively regulates DNA-binding activity of the transcription factor MEF2C in myocardial cells in response to mechanical stress. The sequence is that of Intracellular hyaluronan-binding protein 4 from Homo sapiens (Human).